A 568-amino-acid polypeptide reads, in one-letter code: Cyclin-dependent kinase-like 2 (568 aa).

The region spanning 4 to 289 is the Protein kinase domain; that stretch reads YENLGLVGEG…CADLLRHDFF (286 aa). Residues 10–18 and Lys-33 contribute to the ATP site; that span reads VGEGSYGMV. The short motif at 45 to 51 is the [NKR]KIAxRE element; the sequence is KKIAMRE. Asp-126 serves as the catalytic Proton acceptor. 2 disordered regions span residues 309–333 and 545–568; these read DARN…LGEE and SHQG…EHQH. Residues 322-333 show a composition bias toward basic and acidic residues; it reads RKKEKDDALGEE.

Belongs to the protein kinase superfamily. CMGC Ser/Thr protein kinase family. CDC2/CDKX subfamily. In terms of tissue distribution, expressed in testis, kidney, lung and brain.

The protein localises to the cytoplasm. The protein resides in the nucleus. It catalyses the reaction L-seryl-[protein] + ATP = O-phospho-L-seryl-[protein] + ADP + H(+). It carries out the reaction L-threonyl-[protein] + ATP = O-phospho-L-threonyl-[protein] + ADP + H(+). The chain is Cyclin-dependent kinase-like 2 from Mus musculus (Mouse).